We begin with the raw amino-acid sequence, 462 residues long: Argininosuccinate lyase (462 aa).

Belongs to the lyase 1 family. Argininosuccinate lyase subfamily.

The protein resides in the cytoplasm. The enzyme catalyses 2-(N(omega)-L-arginino)succinate = fumarate + L-arginine. The protein operates within amino-acid biosynthesis; L-arginine biosynthesis; L-arginine from L-ornithine and carbamoyl phosphate: step 3/3. This Xanthobacter autotrophicus (strain ATCC BAA-1158 / Py2) protein is Argininosuccinate lyase.